Consider the following 486-residue polypeptide: FAD-dependent oxidoreductase domain-containing protein 1 (486 aa).

A helical transmembrane segment spans residues 62–82 (EHSDVVIVGGGVLGLSVAYWL).

In terms of assembly, associates with components of the mitochondrial respiratory chain complex I. The cofactor is FAD.

The protein resides in the mitochondrion inner membrane. Its function is as follows. Required for the assembly of the mitochondrial membrane respiratory chain NADH dehydrogenase (Complex I). Involved in mid-late stages of complex I assembly. This is FAD-dependent oxidoreductase domain-containing protein 1 from Homo sapiens (Human).